A 614-amino-acid chain; its full sequence is UvrABC system protein C (614 aa).

The GIY-YIG domain occupies 19-97 (SLPGCYLWKN…IKKYNPKFNV (79 aa)). A UVR domain is found at 208 to 243 (ERLVADLKKAMMDASSKMEYERAGFLKQRIEKINQL).

It belongs to the UvrC family. As to quaternary structure, interacts with UvrB in an incision complex.

The protein localises to the cytoplasm. The UvrABC repair system catalyzes the recognition and processing of DNA lesions. UvrC both incises the 5' and 3' sides of the lesion. The N-terminal half is responsible for the 3' incision and the C-terminal half is responsible for the 5' incision. This Leptospira biflexa serovar Patoc (strain Patoc 1 / Ames) protein is UvrABC system protein C.